Consider the following 326-residue polypeptide: High-affinity zinc uptake system protein ZnuA (326 aa).

Positions Met1–Ala22 are cleaved as a signal peptide. His59 is a Zn(2+) binding site. The span at Gly117–Thr155 shows a compositional bias: basic and acidic residues. The disordered stretch occupies residues Gly117 to Leu161. His158, His222, and Asp295 together coordinate Zn(2+). Cys267 and Cys322 are joined by a disulfide.

It belongs to the bacterial solute-binding protein 9 family. Monomer.

The protein resides in the periplasm. In terms of biological role, part of the ATP-binding cassette (ABC) transport system ZnuABC involved in zinc import. Binds zinc with high affinity and specificity and delivers it to the membrane permease for translocation into the cytoplasm. This Paracoccus denitrificans (strain Pd 1222) protein is High-affinity zinc uptake system protein ZnuA.